Here is a 1538-residue protein sequence, read N- to C-terminus: Arf-GAP with Rho-GAP domain, ANK repeat and PH domain-containing protein 3 (1538 aa).

The region spanning 4–68 is the SAM domain; it reads PQDLDIAVWL…LRLLRAGSAE (65 aa). Disordered stretches follow at residues 72–97, 125–149, and 215–242; these read DSHL…PVPK, SRNS…SVPN, and ASDR…EDAG. The span at 82–97 shows a compositional bias: pro residues; sequence TPSPAPDAQPPKPVPK. Basic and acidic residues predominate over residues 216 to 241; that stretch reads SDRRDGRGVCQERAEHRQDLETREDA. 2 PH domains span residues 282-374 and 389-478; these read VPLL…SCLK and RPLR…EAVT. In terms of domain architecture, Arf-GAP spans 479–606; it reads ETLSDYEVAE…LFRKPHPRHP (128 aa). PH domains are found at residues 671-785 and 795-901; these read ATYR…FSPL and LLRM…AGGG. In terms of domain architecture, Rho-GAP spans 903 to 1084; it reads TGLQEQQMSR…ELIDGYISVF (182 aa). A Ras-associating domain is found at 1113–1206; the sequence is GDLIMEVYIE…ASLLLRKVSM (94 aa). The PH 5 domain occupies 1219-1321; sequence ESPRVGLLRC…WTTSILKAQH (103 aa). Thr-1344 is modified (phosphothreonine). Phosphotyrosine is present on residues Tyr-1399 and Tyr-1404. A compositionally biased stretch (polar residues) spans 1425-1439; that stretch reads WSAKSDPSLTSQRSF. Residues 1425–1538 are disordered; sequence WSAKSDPSLT…SNPPSSQPLT (114 aa). Ser-1438 and Ser-1474 each carry phosphoserine. Low complexity-rich tracts occupy residues 1476–1486 and 1494–1505; these read EEQLLQELNNL and ASCPESSSQPTS. The segment covering 1506-1529 has biased composition (pro residues); sequence PQAPSPTSLPTPTPSLPTQPPCTS.

Interacts (via SAM domain) with INPPL1/SHIP2. Post-translationally, tyrosine phosphorylated at a low basal level. PDGF treatment stimulates phosphorylation. Tyrosine phosphorylation is increased in cells that are in the process of becoming attached to a substrate and that start spreading and flattening.

It localises to the cytoplasm. Its subcellular location is the cell membrane. It is found in the cytoskeleton. The protein localises to the cell projection. The protein resides in the lamellipodium. It localises to the ruffle. Functionally, phosphatidylinositol 3,4,5-trisphosphate-dependent GTPase-activating protein that modulates actin cytoskeleton remodeling by regulating ARF and RHO family members. Is activated by phosphatidylinositol 3,4,5-trisphosphate (PtdIns(3,4,5)P3) binding. Can be activated by phosphatidylinositol 3,4-bisphosphate (PtdIns(3,4,5)P2) binding, albeit with lower efficiency. Acts preferentially on ARF5 and on RHOA. This is Arf-GAP with Rho-GAP domain, ANK repeat and PH domain-containing protein 3 (Arap3) from Mus musculus (Mouse).